Reading from the N-terminus, the 646-residue chain is Pentatricopeptide repeat-containing protein At5g48910 (646 aa).

Positions 1–24 (MNPTQTLFSPGGNSPASSPASHPS) are disordered. A compositionally biased stretch (low complexity) spans 9–24 (SPGGNSPASSPASHPS). PPR repeat units follow at residues 54-88 (DTLAAAEILRFCATSDLHHRDLDYAHKIFNQMPQR), 89-126 (NCFSWNTIIRGFSESDEDKALIAITLFYEMMSDEFVEP), 127-161 (NRFTFPSVLKACAKTGKIQEGKQIHGLALKYGFGG), 162-197 (DEFVMSNLVRMYVMCGFMKDARVLFYKNIIEKDMVV), 207-237 (EIVLWNVMIDGYMRLGDCKAARMLFDKMRQR), 238-272 (SVVSWNTMISGYSLNGFFKDAVEVFREMKKGDIRP), 273-307 (NYVTLVSVLPAISRLGSLELGEWLHLYAEDSGIRI), 308-338 (DDVLGSALIDMYSKCGIIEKAIHVFERLPRE), 339-373 (NVITWSAMINGFAIHGQAGDAIDCFCKMRQAGVRP), 374-409 (SDVAYINLLTACSHGGLVEEGRRYFSQMVSVDGLEP), and 410-440 (RIEHYGCMVDLLGRSGLLDEAEEFILNMPIK). The interval 445-520 (IWKALLGACR…DPGCSLIDID (76 aa)) is type E motif. Positions 521–551 (GVLHEFVVEDDSHPKAKEINSMLVEISDKLR) are type E(+) motif. A type DYW motif region spans residues 552–646 (LAGYRPITTQ…DGSCSCMDYW (95 aa)).

This sequence belongs to the PPR family. PCMP-H subfamily.

This chain is Pentatricopeptide repeat-containing protein At5g48910 (PCMP-H38), found in Arabidopsis thaliana (Mouse-ear cress).